A 291-amino-acid polypeptide reads, in one-letter code: Oxidative stress-responsive serine-rich protein 1 (291 aa).

The disordered stretch occupies residues 44-139 (RTTVDDTKPK…STGENSTSLD (96 aa)). Residues 65–83 (STRKSSRGAVRIQRRRRSK) are compositionally biased toward basic residues. Polar residues-rich tracts occupy residues 95 to 113 (CSTT…SQTE) and 127 to 139 (KEFS…TSLD). Position 143 is a phosphothreonine (Thr143).

As to expression, ubiquitous with high level in testis, placenta and cardiac myocytes. In terms of tissue distribution, expressed in testis, unpreganant uterus and cardiac myocytes.

The polypeptide is Oxidative stress-responsive serine-rich protein 1 (Oser1) (Rattus norvegicus (Rat)).